The chain runs to 143 residues: Large ribosomal subunit protein uL15 (143 aa).

Composition is skewed to basic residues over residues 1–13 and 23–38; these read MIRKSKKITKMRG and KKHRGAGHRGGRGNAG. The tract at residues 1 to 38 is disordered; the sequence is MIRKSKKITKMRGSRTCGYGEAKKHRGAGHRGGRGNAG.

The protein belongs to the universal ribosomal protein uL15 family. Part of the 50S ribosomal subunit.

Functionally, binds to the 23S rRNA. The sequence is that of Large ribosomal subunit protein uL15 from Methanococcus maripaludis (strain C7 / ATCC BAA-1331).